The chain runs to 447 residues: MNNIIPTEETHPLTWRLRNDRETVWIEEYCKKNGYFSLKKALKTMCPEDVVHLIKESGLKGRGGAGFSTGLKWSLMSKDNSSKIRYLLCNADEMEPGTYKDRFLMENIPHQLIEGMLLSAFALNVSRGYIFLRGEYIKAEYILKKSIQEAINFGFIGSNILNSGFNFELFLHTGAGRYICGEETALINSLEGRRANPRAKPPFPAVFGLWGKPTCVNNVETLSNVPSIVLHGVNWYKKLSKSTDTTGTKLMGFSGKVNNPGVWELPFGTTAREILEDYARGMKSGLFLKSWQPGGAGTDFLIEKHLDLPMDFTSIAKAGSRLGTAIAMAVDNKTNMISLVCNIEKFFSRESCGLCTPCREGLPWIVKILESLEKKEGHKNDVKNLERLCLDLSPGKTFCAHAPGAVEPLQSAIKYFRLEFEAGISIKKLKKCSNILGIQSNEFTSKV.

Residue 61–70 coordinates NAD(+); sequence GRGGAGFSTG. 174-221 is a binding site for FMN; the sequence is GAGRYICGEETALINSLEGRRANPRAKPPFPAVFGLWGKPTCVNNVET. Cys352, Cys355, Cys358, and Cys399 together coordinate [4Fe-4S] cluster.

It belongs to the complex I 51 kDa subunit family. In terms of assembly, composed of 13 different subunits. Subunits NuoCD, E, F, and G constitute the peripheral sector of the complex. It depends on [4Fe-4S] cluster as a cofactor. FMN serves as cofactor.

It catalyses the reaction a quinone + NADH + 5 H(+)(in) = a quinol + NAD(+) + 4 H(+)(out). In terms of biological role, NDH-1 shuttles electrons from NADH, via FMN and iron-sulfur (Fe-S) centers, to quinones in the respiratory chain. Couples the redox reaction to proton translocation (for every two electrons transferred, four hydrogen ions are translocated across the cytoplasmic membrane), and thus conserves the redox energy in a proton gradient. This chain is NADH-quinone oxidoreductase subunit F (nuoF), found in Buchnera aphidicola subsp. Schizaphis graminum (strain Sg).